We begin with the raw amino-acid sequence, 530 residues long: DNA damage-binding protein cmr1 (530 aa).

Disordered stretches follow at residues valine 34–aspartate 115 and threonine 224–leucine 250. Basic residues predominate over residues alanine 52 to valine 62. Positions glutamate 89–alanine 108 are enriched in basic and acidic residues. A WD 1 repeat occupies leucine 188 to alanine 229. The span at aspartate 233–aspartate 244 shows a compositional bias: acidic residues. WD repeat units follow at residues proline 252–arginine 292, valine 302–alanine 339, leucine 344–proline 384, glutamate 389–lysine 430, glycine 453–leucine 496, and aspartate 499–methionine 530.

This sequence belongs to the WD repeat DDB2/WDR76 family.

Functionally, DNA-binding protein that binds to both single- and double-stranded DNA. Binds preferentially to UV-damaged DNA. May be involved in DNA-metabolic processes. The sequence is that of DNA damage-binding protein cmr1 from Aspergillus terreus (strain NIH 2624 / FGSC A1156).